Consider the following 241-residue polypeptide: Chalcone--flavanone isomerase C (241 aa).

3 residues coordinate substrate: T50, N115, and S192.

The protein belongs to the chalcone isomerase family.

It carries out the reaction a chalcone = a flavanone.. Its pathway is secondary metabolite biosynthesis; flavonoid biosynthesis. Its function is as follows. Catalyzes the intramolecular cyclization of bicyclic chalcones into tricyclic (S)-flavanones. Responsible for the isomerization of 4,2',4',6'-tetrahydroxychalcone (also termed chalcone) into naringenin. The protein is Chalcone--flavanone isomerase C (CHI3) of Petunia hybrida (Petunia).